Reading from the N-terminus, the 485-residue chain is ATP-dependent 6-phosphofructokinase (485 aa).

ATP-binding positions include G105, 171-172 (RG), and 196-199 (GDGT). D197 is a Mg(2+) binding site. Substrate is bound by residues 225–227 (TID), 270–272 (MGR), E323, and 378–381 (YMIR). Catalysis depends on D227, which acts as the Proton acceptor. A Peroxisomal targeting signal motif is present at residues 483-485 (SKL).

The protein belongs to the phosphofructokinase type A (PFKA) family. PPi-dependent PFK group II subfamily. Atypical ATP-dependent clade 'X' sub-subfamily. As to quaternary structure, homotetramer. Mg(2+) is required as a cofactor.

It is found in the glycosome. It carries out the reaction beta-D-fructose 6-phosphate + ATP = beta-D-fructose 1,6-bisphosphate + ADP + H(+). It functions in the pathway carbohydrate degradation; glycolysis; D-glyceraldehyde 3-phosphate and glycerone phosphate from D-glucose: step 3/4. With respect to regulation, allosterically activated by AMP. Catalyzes the phosphorylation of D-fructose 6-phosphate to fructose 1,6-bisphosphate by ATP, the first committing step of glycolysis. In Trypanosoma cruzi (strain CL Brener), this protein is ATP-dependent 6-phosphofructokinase.